A 166-amino-acid chain; its full sequence is NADH-quinone oxidoreductase subunit A (166 aa).

The next 3 helical transmembrane spans lie at 16–36 (FAVFLIGAVGLCGLMLLGAYF), 68–88 (FYLVAMFFVIFDVEALYLYAW), and 98–118 (IGFIEAAIFILVLLAGLFYLV). A disordered region spans residues 141–166 (RYASSHPQDISQELSVAGSQQANESR).

It belongs to the complex I subunit 3 family. As to quaternary structure, NDH-1 is composed of 13 different subunits. Subunits NuoA, H, J, K, L, M, N constitute the membrane sector of the complex.

It localises to the cell inner membrane. The enzyme catalyses a quinone + NADH + 5 H(+)(in) = a quinol + NAD(+) + 4 H(+)(out). Its function is as follows. NDH-1 shuttles electrons from NADH, via FMN and iron-sulfur (Fe-S) centers, to quinones in the respiratory chain. The immediate electron acceptor for the enzyme in this species is believed to be ubiquinone. Couples the redox reaction to proton translocation (for every two electrons transferred, four hydrogen ions are translocated across the cytoplasmic membrane), and thus conserves the redox energy in a proton gradient. This chain is NADH-quinone oxidoreductase subunit A, found in Yersinia pseudotuberculosis serotype O:1b (strain IP 31758).